We begin with the raw amino-acid sequence, 548 residues long: Lipase 2 (548 aa).

The signal sequence occupies residues M1 to A14. A disulfide bridge connects residues C74 and C111. S223 functions as the Acyl-ester intermediate in the catalytic mechanism. C282 and C291 are disulfide-bonded. E355 serves as the catalytic Charge relay system. An N-linked (GlcNAc...) asparagine glycan is attached at N365. Catalysis depends on H463, which acts as the Charge relay system.

This sequence belongs to the type-B carboxylesterase/lipase family.

The enzyme catalyses a triacylglycerol + H2O = a diacylglycerol + a fatty acid + H(+). The chain is Lipase 2 (LIP2) from Diutina rugosa (Yeast).